The sequence spans 102 residues: Small ribosomal subunit protein uS10 (102 aa).

This sequence belongs to the universal ribosomal protein uS10 family. Part of the 30S ribosomal subunit.

In terms of biological role, involved in the binding of tRNA to the ribosomes. In Paramagnetospirillum magneticum (strain ATCC 700264 / AMB-1) (Magnetospirillum magneticum), this protein is Small ribosomal subunit protein uS10.